We begin with the raw amino-acid sequence, 213 residues long: Adenylate kinase (213 aa).

10-15 (GSGKGS) contributes to the ATP binding site. The interval 30–60 (STGNLFRAILKEDSELARKIKEINVSGGKLV) is NMP. AMP contacts are provided by residues Thr31, Arg36, 58-60 (KLV), 87-90 (GYPR), and Gln94. Residues 123 to 160 (GRWMCPKCAGIYNIHFKKPQVDGVCDNDQATLYQRADD) form an LID region. ATP is bound at residue Arg124. 2 residues coordinate Zn(2+): Cys127 and Cys130. An ATP-binding site is contributed by 133–134 (IY). The Zn(2+) site is built by Cys147 and Asp150. Residues Arg157 and Arg168 each contribute to the AMP site. Gln196 contributes to the ATP binding site.

It belongs to the adenylate kinase family. As to quaternary structure, monomer.

It is found in the cytoplasm. The enzyme catalyses AMP + ATP = 2 ADP. The protein operates within purine metabolism; AMP biosynthesis via salvage pathway; AMP from ADP: step 1/1. Its function is as follows. Catalyzes the reversible transfer of the terminal phosphate group between ATP and AMP. Plays an important role in cellular energy homeostasis and in adenine nucleotide metabolism. This is Adenylate kinase from Ureaplasma urealyticum serovar 10 (strain ATCC 33699 / Western).